Reading from the N-terminus, the 201-residue chain is Proteasome subunit beta 1 (201 aa).

Residue Met-1 is a propeptide, removed in mature form; by autocatalysis. Thr-2 (nucleophile) is an active-site residue.

It belongs to the peptidase T1B family. As to quaternary structure, the 20S proteasome core is composed of 14 alpha and 14 beta subunits that assemble into four stacked heptameric rings, resulting in a barrel-shaped structure. The two inner rings, each composed of seven catalytic beta subunits, are sandwiched by two outer rings, each composed of seven alpha subunits. The catalytic chamber with the active sites is on the inside of the barrel. Has a gated structure, the ends of the cylinder being occluded by the N-termini of the alpha-subunits. Is capped at one or both ends by the proteasome regulatory ATPase, PAN.

The protein resides in the cytoplasm. It catalyses the reaction Cleavage of peptide bonds with very broad specificity.. The formation of the proteasomal ATPase PAN-20S proteasome complex, via the docking of the C-termini of PAN into the intersubunit pockets in the alpha-rings, triggers opening of the gate for substrate entry. Interconversion between the open-gate and close-gate conformations leads to a dynamic regulation of the 20S proteasome proteolysis activity. Functionally, component of the proteasome core, a large protease complex with broad specificity involved in protein degradation. This is Proteasome subunit beta 1 from Pyrobaculum neutrophilum (strain DSM 2338 / JCM 9278 / NBRC 100436 / V24Sta) (Thermoproteus neutrophilus).